The sequence spans 318 residues: sn-1 stearoyl-lipid 9-desaturase (318 aa).

Helical transmembrane passes span 56-76 and 80-100; these read VIFF…PQFF and AVGM…TLGF. The Histidine box-1 motif lies at 101-106; that stretch reads HRCISH. The chain crosses the membrane as a helical span at residues 117–137; the sequence is YIFVICGTLACQGGVFEWVGL. Positions 138-142 match the Histidine box-2 motif; it reads HRMHH. A helical transmembrane segment spans residues 201 to 221; that stretch reads VALGLILFALGGWPFVIWGIF. The Histidine box-3 motif lies at 271–275; sequence HHAYQ.

It belongs to the fatty acid desaturase type 2 family. Fe(2+) is required as a cofactor.

Its subcellular location is the cellular thylakoid membrane. The catalysed reaction is a 1-octadecanoyl 2-acyl-glycerolipid + 2 reduced [2Fe-2S]-[ferredoxin] + O2 + 2 H(+) = a 1-[(9Z)-octadecenoyl]-2-acyl-glycerolipid + 2 oxidized [2Fe-2S]-[ferredoxin] + 2 H2O. It functions in the pathway lipid metabolism; polyunsaturated fatty acid biosynthesis. Functionally, desaturase involved in fatty acid biosynthesis. Introduces a double bond at carbon 9 of stearoyl groups (18:0) attached to the sn-1 position of the glycerol moiety of membrane glycerolipids. Does not desaturate palmitic acid (16:0), palmitoleic acid (16:1) and cis-vaccenic acid (18:1). This is sn-1 stearoyl-lipid 9-desaturase from Synechocystis sp. (strain ATCC 27184 / PCC 6803 / Kazusa).